Reading from the N-terminus, the 180-residue chain is Formate hydrogenlyase subunit 6 (180 aa).

4Fe-4S ferredoxin-type domains lie at 31–60 and 66–95; these read GKPE…VETD and LAWE…LSQE. Residues Cys40, Cys43, Cys46, Cys50, Cys75, Cys78, Cys81, and Cys85 each coordinate [4Fe-4S] cluster.

FHL comprises of a formate dehydrogenase, unidentified electron carriers and a hydrogenase (isoenzyme 3). In this non-energy conserving pathway, molecular hydrogen and carbodioxide are released from formate.

In terms of biological role, probable electron transfer protein for hydrogenase 3. In Escherichia coli (strain K12), this protein is Formate hydrogenlyase subunit 6 (hycF).